The sequence spans 544 residues: MKISMINYKSLLALLFILASWIIFTVFQNSTKVWSALNLSISLHYWNNSTKSLFPKTPLISLKPLTETELRIKEIIEKLDQQIPPRPFTHVNTTTSATHSTATILNPRDTYCRGDQLHILLEVRDHLGRRKQYGGDFLRARMSSPALMAGASGKVTDFNNGTYLVSFTLFWEGQVSLSLLLIHPSEGVSALWSARNQGYDRVIFTGQFVNGTSQVHSECGLILNTNAELCQYLDNRDQEGFYCVRPQHMPCAALTHMYSKNKKVSYLSKQEKSLFERSNVGVEIMEKFNTISVSKCNKETVAMKEKCKFGMTSTIPSGHVWRNTWNPVSCSLATVKMKECLRGKLIYLMGDSTIRQWMEYFKASINTLKSVDLHESGKLQHQLAVDLDRNINIQWQKYCYPLIGSMTYSVKEMEYLTRAIDRTGGEKNTVIVISLGQHFRPFPIDVFIRRALNVHKAIQHLLLRSPDTMVIIKTENIREMYNDAERFSDFHGYIQYLIIKDIFQDLSVSIIDAWDITIAYGTNNVHPPQHVVGNQINILLNYIC.

Positions 1 to 27 (MKISMINYKSLLALLFILASWIIFTVF) are cleaved as a signal peptide. N29, N38, N47, N48, N92, N160, and N210 each carry an N-linked (GlcNAc...) asparagine glycan.

It belongs to the NXPE family.

The protein resides in the secreted. This chain is NXPE family member 4 (NXPE4), found in Homo sapiens (Human).